We begin with the raw amino-acid sequence, 696 residues long: Polyribonucleotide nucleotidyltransferase (696 aa).

Residues D483 and D489 each coordinate Mg(2+). Positions P550 to I609 constitute a KH domain. The 69-residue stretch at G619 to K687 folds into the S1 motif domain.

Belongs to the polyribonucleotide nucleotidyltransferase family. Mg(2+) is required as a cofactor.

The protein localises to the cytoplasm. It carries out the reaction RNA(n+1) + phosphate = RNA(n) + a ribonucleoside 5'-diphosphate. In terms of biological role, involved in mRNA degradation. Catalyzes the phosphorolysis of single-stranded polyribonucleotides processively in the 3'- to 5'-direction. In Geotalea daltonii (strain DSM 22248 / JCM 15807 / FRC-32) (Geobacter daltonii), this protein is Polyribonucleotide nucleotidyltransferase.